Consider the following 71-residue polypeptide: Hainantoxin-X-2 (71 aa).

An N-terminal signal peptide occupies residues 1 to 26 (MKTAIFTVVLALAVFAVLCLVVSTHA). The propeptide occupies 27 to 43 (ERHSKTDMEDSPMIQER). Cystine bridges form between Cys52–Cys65 and Cys61–Cys70.

It belongs to the neurotoxin 36 family. 02 subfamily. Expressed by the venom gland.

It localises to the secreted. Its function is as follows. Reversibly blocks N-type calcium channels (Cav2.2/CACNA1B) in rat dorsal root ganglion cells. Elicits no toxic symptoms in either vertebrates or invertebrates during a period of 48 hours post-injection, when it was assayed in vivo by direct injection into mice and cockroaches. This Cyriopagopus hainanus (Chinese bird spider) protein is Hainantoxin-X-2.